A 598-amino-acid chain; its full sequence is Aspartate--tRNA(Asp/Asn) ligase (598 aa).

Glu177 provides a ligand contact to L-aspartate. The interval 201-204 (QLFK) is aspartate. Arg223 is an L-aspartate binding site. Residues 223–225 (RDE) and Gln232 each bind ATP. His456 contacts L-aspartate. Residue Glu493 participates in ATP binding. Residue Arg500 coordinates L-aspartate. 545–548 (GVDR) contributes to the ATP binding site.

It belongs to the class-II aminoacyl-tRNA synthetase family. Type 1 subfamily. Homodimer.

The protein resides in the cytoplasm. It catalyses the reaction tRNA(Asx) + L-aspartate + ATP = L-aspartyl-tRNA(Asx) + AMP + diphosphate. In terms of biological role, aspartyl-tRNA synthetase with relaxed tRNA specificity since it is able to aspartylate not only its cognate tRNA(Asp) but also tRNA(Asn). Reaction proceeds in two steps: L-aspartate is first activated by ATP to form Asp-AMP and then transferred to the acceptor end of tRNA(Asp/Asn). This is Aspartate--tRNA(Asp/Asn) ligase from Prochlorococcus marinus subsp. pastoris (strain CCMP1986 / NIES-2087 / MED4).